The following is a 179-amino-acid chain: ATP-dependent protease subunit HslV (179 aa).

The active site involves Thr-6. Ser-164, Cys-167, and Thr-170 together coordinate Na(+).

The protein belongs to the peptidase T1B family. HslV subfamily. A double ring-shaped homohexamer of HslV is capped on each side by a ring-shaped HslU homohexamer. The assembly of the HslU/HslV complex is dependent on binding of ATP.

Its subcellular location is the cytoplasm. The catalysed reaction is ATP-dependent cleavage of peptide bonds with broad specificity.. With respect to regulation, allosterically activated by HslU binding. Functionally, protease subunit of a proteasome-like degradation complex believed to be a general protein degrading machinery. This Listeria innocua serovar 6a (strain ATCC BAA-680 / CLIP 11262) protein is ATP-dependent protease subunit HslV.